The following is a 554-amino-acid chain: MPTINVNKVDLERLSNISLSDKLIEDRFPMMGVEVEEIFEEVDKNGKKQNMVQFSINPDRPDYLSVEGLARGFRGFMGITTGIQEFEVLDSDIKVTVEENETRPYVAFALVKNVLMDEFVLESMINLQEKLHWAIGRDRKKLAIGIHDFDKVKAPFTYKEIKGDEIKFVPLGYEDEEMTPREIIEKHEKGIKYAHLIQNDKFPIILDANGEVLSLPPIINGTLTKVTPTSKNLLIDITGTEKEAVEETLNIIVCALVERRGTIVSVNVNGKKYPDLTPKSRIISVESINKKLGLNLNPGEIIQALKKSGMDALYEDGNLIVKIPAYRNDILQNVDLKEEIAINYGYEKFDGKLPSVATTGSKDPVEKKCSAMSDLMIGLGFYEVMNLTLSNQDTLFEKMNLKVDEKDYIEVLKPASIEHRVLRTSILPLLLETLYINKHNALPQKIFEVGDCVVIDEEDTETDTKCKNIKKIAGAITHPLTNFNEIKSSTEALLREFFEGFEFENYEHPAFIPGRCAKILKSGKEVGFFGEIHPEVILNFELEHPVVGFEITIE.

A B5 domain is found at 276–351; that stretch reads LTPKSRIISV…INYGYEKFDG (76 aa). Mg(2+)-binding residues include Asp-329, Asp-335, Glu-338, and Glu-339.

It belongs to the phenylalanyl-tRNA synthetase beta subunit family. Type 2 subfamily. Tetramer of two alpha and two beta subunits. Mg(2+) is required as a cofactor.

It is found in the cytoplasm. It carries out the reaction tRNA(Phe) + L-phenylalanine + ATP = L-phenylalanyl-tRNA(Phe) + AMP + diphosphate + H(+). This chain is Phenylalanine--tRNA ligase beta subunit, found in Methanococcus maripaludis (strain DSM 14266 / JCM 13030 / NBRC 101832 / S2 / LL).